The chain runs to 1009 residues: Glutamate receptor ionotropic, delta-1 (1009 aa).

Residues 1 to 20 (MEALTLWLLPWICQCVSVRA) form the signal peptide. Positions 21–436 (DSIIHIGAIF…ERPMGSRLQG (416 aa)) are interaction with CBLN1. Over 21 to 562 (DSIIHIGAIF…SIFSLFAPFD (542 aa)) the chain is Extracellular. Cystine bridges form between cysteine 80–cysteine 351, cysteine 96–cysteine 128, and cysteine 294–cysteine 306. Asparagine 131 and asparagine 200 each carry an N-linked (GlcNAc...) asparagine glycan. N-linked (GlcNAc...) asparagine glycans are attached at residues asparagine 422 and asparagine 498. Ca(2+)-binding residues include glutamate 527, valine 530, and aspartate 531. A helical membrane pass occupies residues 563–583 (FAVWACIAAAIPVVGVLIFVL). The Cytoplasmic segment spans residues 584 to 637 (NRIQAVRAQSAAQPRPSASATLHSAIWIVYGAFVQQGGESSVNSMAMRIVMGSW). A helical transmembrane segment spans residues 638-658 (WLFTLIVCSSYTANLAAFLTV). Topologically, residues 659–830 (SRMDNPIRTF…ADGKSLKLHS (172 aa)) are extracellular. Ca(2+) contacts are provided by aspartate 753, aspartate 755, and serine 757. The helical transmembrane segment at 831-851 (FAGVFCILAIGLLLACLVAAL) threads the bilayer. Residues 852 to 1009 (ELWWNSNRCH…ALDTSHGTSI (158 aa)) lie on the Cytoplasmic side of the membrane. The span at 930 to 942 (FLPEQSSHGTSRT) shows a compositional bias: polar residues. The disordered stretch occupies residues 930-954 (FLPEQSSHGTSRTLSSGPSSNLPLP). Residues 943–954 (LSSGPSSNLPLP) are compositionally biased toward low complexity.

This sequence belongs to the glutamate-gated ion channel (TC 1.A.10.1) family. GRID1 subfamily. In terms of assembly, homodimer. Interacts (via extracellular N-terminal domain) with CBLN1 (via C1q domain), and more weakly with CBLN2; the interactions mediate the trans-synaptic adhesion complexes also with neurexins and are required for ligand-gated cation channel activity.

Its subcellular location is the postsynaptic cell membrane. It carries out the reaction Ca(2+)(in) = Ca(2+)(out). It catalyses the reaction Na(+)(in) = Na(+)(out). Its function is as follows. Member of the ionotropic glutamate receptor family, which plays a crucial role in synaptic organization and signal transduction in the central nervous system. Although it shares structural features with ionotropic glutamate receptors, does not bind glutamate as a primary ligand. Instead, forms trans-synaptic adhesion complexes with presynaptic neurexins and cerebellins, regulating NMDA and AMPA receptor activity and influencing synaptic plasticity through signal transduction. In the presence of neurexins and cerebellins, forms cation-selective channels that are proposed to be gated by glycine and D-serine. However, recent research disputes this ligand-gated cation channel activity. Cation-selective ion channel can be triggered by GRM1 in dopaminergic neurons. Also acts as a receptor for GABA, modulating inhibitory synaptic plasticity through non-ionotropic mechanisms. The protein is Glutamate receptor ionotropic, delta-1 of Homo sapiens (Human).